A 43-amino-acid polypeptide reads, in one-letter code: Protein PsbN (43 aa).

The helical transmembrane segment at 7 to 27 (LIVFIASLLLGVTGYSVYTAF) threads the bilayer.

Belongs to the PsbN family.

It is found in the plastid. Its subcellular location is the chloroplast thylakoid membrane. Its function is as follows. May play a role in photosystem I and II biogenesis. The protein is Protein PsbN of Rhodomonas salina (Cryptomonas salina).